We begin with the raw amino-acid sequence, 84 residues long: DNA-directed RNA polymerase subunit Rpo5 (84 aa).

This sequence belongs to the archaeal Rpo5/eukaryotic RPB5 RNA polymerase subunit family. As to quaternary structure, part of the 13-subunit RNA polymerase.

It is found in the cytoplasm. It catalyses the reaction RNA(n) + a ribonucleoside 5'-triphosphate = RNA(n+1) + diphosphate. DNA-dependent RNA polymerase (RNAP) catalyzes the transcription of DNA into RNA using the four ribonucleoside triphosphates as substrates. Functionally, reconstitution experiments show this subunit is required for basic activity. This Sulfolobus acidocaldarius (strain ATCC 33909 / DSM 639 / JCM 8929 / NBRC 15157 / NCIMB 11770) protein is DNA-directed RNA polymerase subunit Rpo5.